The following is a 525-amino-acid chain: MTQNIHQDRILILDFGSQYTQLLARRVREIGVYCELWAWDVSEAQIRDFNPSGIILSGGPESTTEAGSPRAPEYVFQAGVPVLGVCYGMQTMAMQLGGRVESSTEREFGYAKVEVTAPGRLFDGIQDALSADGNAVLDVWMSHGDKVTAIPSDFTTVASTETCPYAIMANEAKRFYGVQFHPEVTHTHQGQHMLQRFVLEICGCAALWTPATIIEDAVVRMREQIGDDEVILGLSGGVDSSVTALLLHRAIGKRLTCVFVDNGLLRLNEAEQVMDMFGDRFGLNIIHVNAEARFLSALSGIADPEAKRKTIGRVFVEVFDEEAAKLPQVKWLAQGTIYPDVIESAASATGKAHVIKSHHNVGGLPEEMKLGLVEPLKELFKDEVRKIGLELGLPYDMLYRHPFPGPGLGVRVLGEVKKEYCDLLRRADAIFIEELHKADLYNKVSQAFTVFLPVRSVGVMGDGRKYDWVVSLRAVETIDFMTAHWAHLPYDFLGRVSNRIINEVNGISRVVYDISGKPPATIEWE.

One can recognise a Glutamine amidotransferase type-1 domain in the interval 9-207; it reads RILILDFGSQ…VLEICGCAAL (199 aa). Catalysis depends on C86, which acts as the Nucleophile. Residues H181 and E183 contribute to the active site. One can recognise a GMPS ATP-PPase domain in the interval 208 to 400; it reads WTPATIIEDA…LGLPYDMLYR (193 aa). 235–241 lines the ATP pocket; sequence SGGVDSS.

Homodimer.

The catalysed reaction is XMP + L-glutamine + ATP + H2O = GMP + L-glutamate + AMP + diphosphate + 2 H(+). The protein operates within purine metabolism; GMP biosynthesis; GMP from XMP (L-Gln route): step 1/1. Functionally, catalyzes the synthesis of GMP from XMP. The sequence is that of GMP synthase [glutamine-hydrolyzing] from Edwardsiella ictaluri (strain 93-146).